Consider the following 488-residue polypeptide: Bifunctional protein HldE (488 aa).

The ribokinase stretch occupies residues 1 to 332 (MRESFLDTIQ…QELQSQQSAA (332 aa)). 208-211 (NKRE) is a binding site for ATP. The active site involves Asp277. Residues 359–488 (FTNGCFDLLH…TSNIIRKLAS (130 aa)) are cytidylyltransferase.

This sequence in the N-terminal section; belongs to the carbohydrate kinase PfkB family. The protein in the C-terminal section; belongs to the cytidylyltransferase family. In terms of assembly, homodimer.

The catalysed reaction is D-glycero-beta-D-manno-heptose 7-phosphate + ATP = D-glycero-beta-D-manno-heptose 1,7-bisphosphate + ADP + H(+). It carries out the reaction D-glycero-beta-D-manno-heptose 1-phosphate + ATP + H(+) = ADP-D-glycero-beta-D-manno-heptose + diphosphate. Its pathway is nucleotide-sugar biosynthesis; ADP-L-glycero-beta-D-manno-heptose biosynthesis; ADP-L-glycero-beta-D-manno-heptose from D-glycero-beta-D-manno-heptose 7-phosphate: step 1/4. It functions in the pathway nucleotide-sugar biosynthesis; ADP-L-glycero-beta-D-manno-heptose biosynthesis; ADP-L-glycero-beta-D-manno-heptose from D-glycero-beta-D-manno-heptose 7-phosphate: step 3/4. Its function is as follows. Catalyzes the phosphorylation of D-glycero-D-manno-heptose 7-phosphate at the C-1 position to selectively form D-glycero-beta-D-manno-heptose-1,7-bisphosphate. In terms of biological role, catalyzes the ADP transfer from ATP to D-glycero-beta-D-manno-heptose 1-phosphate, yielding ADP-D-glycero-beta-D-manno-heptose. This is Bifunctional protein HldE from Methylobacillus flagellatus (strain ATCC 51484 / DSM 6875 / VKM B-1610 / KT).